A 396-amino-acid chain; its full sequence is 1-deoxy-D-xylulose 5-phosphate reductoisomerase (396 aa).

NADPH contacts are provided by Thr10, Gly11, Ser12, Ile13, and Asn123. Lys124 lines the 1-deoxy-D-xylulose 5-phosphate pocket. Glu125 contacts NADPH. Asp149 provides a ligand contact to Mn(2+). Ser150, Glu151, Ser185, and His208 together coordinate 1-deoxy-D-xylulose 5-phosphate. A Mn(2+)-binding site is contributed by Glu151. Gly214 lines the NADPH pocket. Positions 221, 226, 227, and 230 each coordinate 1-deoxy-D-xylulose 5-phosphate. Position 230 (Glu230) interacts with Mn(2+).

This sequence belongs to the DXR family. Mg(2+) serves as cofactor. Requires Mn(2+) as cofactor.

It catalyses the reaction 2-C-methyl-D-erythritol 4-phosphate + NADP(+) = 1-deoxy-D-xylulose 5-phosphate + NADPH + H(+). It participates in isoprenoid biosynthesis; isopentenyl diphosphate biosynthesis via DXP pathway; isopentenyl diphosphate from 1-deoxy-D-xylulose 5-phosphate: step 1/6. In terms of biological role, catalyzes the NADPH-dependent rearrangement and reduction of 1-deoxy-D-xylulose-5-phosphate (DXP) to 2-C-methyl-D-erythritol 4-phosphate (MEP). In Shewanella baltica (strain OS155 / ATCC BAA-1091), this protein is 1-deoxy-D-xylulose 5-phosphate reductoisomerase.